The following is a 292-amino-acid chain: Nucleotide-binding protein azo0399 (292 aa).

Residue 8–15 (GLSGSGKS) coordinates ATP. 57 to 60 (DMRS) is a GTP binding site.

Belongs to the RapZ-like family.

Functionally, displays ATPase and GTPase activities. The chain is Nucleotide-binding protein azo0399 from Azoarcus sp. (strain BH72).